The following is a 336-amino-acid chain: F420-dependent glucose-6-phosphate dehydrogenase (336 aa).

Residue Asp37 participates in coenzyme F420-(gamma-Glu)n binding. Catalysis depends on His38, which acts as the Proton donor. Residues Thr74 and 105–106 (SG) each bind coenzyme F420-(gamma-Glu)n. The Proton acceptor role is filled by Glu107. Coenzyme F420-(gamma-Glu)n-binding positions include Asn110, 173–174 (SG), and 176–177 (SA). Residues Thr191, Lys194, Lys255, and Arg279 each contribute to the substrate site.

This sequence belongs to the F420-dependent glucose-6-phosphate dehydrogenase family. Homodimer.

The catalysed reaction is oxidized coenzyme F420-(gamma-L-Glu)(n) + D-glucose 6-phosphate + H(+) = 6-phospho-D-glucono-1,5-lactone + reduced coenzyme F420-(gamma-L-Glu)(n). In terms of biological role, catalyzes the coenzyme F420-dependent oxidation of glucose 6-phosphate (G6P) to 6-phosphogluconolactone. The chain is F420-dependent glucose-6-phosphate dehydrogenase from Beutenbergia cavernae (strain ATCC BAA-8 / DSM 12333 / CCUG 43141 / JCM 11478 / NBRC 16432 / NCIMB 13614 / HKI 0122).